The following is a 321-amino-acid chain: tRNA U34 carboxymethyltransferase (321 aa).

Residues Lys90, Trp104, Lys109, Gly129, 151–153 (DPT), 180–181 (IE), Met195, Tyr199, and Arg314 each bind carboxy-S-adenosyl-L-methionine.

Belongs to the class I-like SAM-binding methyltransferase superfamily. CmoB family. Homotetramer.

The enzyme catalyses carboxy-S-adenosyl-L-methionine + 5-hydroxyuridine(34) in tRNA = 5-carboxymethoxyuridine(34) in tRNA + S-adenosyl-L-homocysteine + H(+). Its function is as follows. Catalyzes carboxymethyl transfer from carboxy-S-adenosyl-L-methionine (Cx-SAM) to 5-hydroxyuridine (ho5U) to form 5-carboxymethoxyuridine (cmo5U) at position 34 in tRNAs. This Haemophilus influenzae (strain PittEE) protein is tRNA U34 carboxymethyltransferase.